The chain runs to 63 residues: Metallothionein-2 (63 aa).

Residues 1-30 form a beta region; it reads MDPQDCTCAAGDSCSCAGSCKCKNCRCQSC. Cys6, Cys8, Cys14, Cys16, Cys20, Cys22, Cys25, Cys27, Cys30, Cys34, Cys35, Cys37, Cys38, Cys42, Cys45, Cys49, Cys51, Cys59, Cys61, and Cys62 together coordinate a divalent metal cation. The segment at 31 to 63 is alpha; the sequence is RKSCCSCCPASCSNCAKGCVCKEPSSSKCSCCH.

This sequence belongs to the metallothionein superfamily. Type 1 family.

Its function is as follows. Metallothioneins have a high content of cysteine residues that bind various heavy metals. In Columba livia (Rock dove), this protein is Metallothionein-2.